The sequence spans 160 residues: Baculoviral IAP repeat-containing protein 5.1-B (160 aa).

One copy of the BIR repeat lies at 13–83 (QRLQDFRNMY…EGWEPDDDPW (71 aa)). At T43 the chain carries Phosphothreonine; by CDK1. Zn(2+)-binding residues include C66, C69, H86, and C93.

Belongs to the IAP family. In terms of assembly, component of the CPC at least composed of survivin/birc5, incenp, cdca8/borealin and/or cdca9/dasra-A, and aurkb/aurora-B. Interacts directly with incenp (via N-terminus), and may weakly interact with aurkb (via N-terminus) to stabilize the complex. Interacts with GTP-bound ran in both the S and M phases of the cell cycle. Also found in a complex with ubiquitin-mediated signaling proteins including at least usp9x/xFAM, nploc4/npl4 and ufd1. In terms of processing, ubiquitination is required for centrosome-targeting.

It is found in the cytoplasm. It localises to the nucleus. Its subcellular location is the chromosome. The protein resides in the centromere. The protein localises to the cytoskeleton. It is found in the spindle. Component of the chromosomal passenger complex (CPC), a complex that acts as a key regulator of mitosis. The CPC complex has essential functions at the centromere in ensuring correct chromosome alignment and segregation and is required for chromatin-induced microtubule stabilization and spindle assembly. Stimulates the mitotic kinase activity of aurkb/aurora-B in the CPC. Does not appear to exhibit anti-apoptotic activity. CPC. Does not appear to exhibit anti-apoptotic activity. This is Baculoviral IAP repeat-containing protein 5.1-B (birc5.1-b) from Xenopus laevis (African clawed frog).